A 152-amino-acid polypeptide reads, in one-letter code: Small ribosomal subunit protein bS6 (152 aa).

Residues 96–152 (HEEGPSAMLQKRDRDDRGPREGGDRGPRREFGDRPPRRDGDFQRGPRPDRAPREDRA) are disordered.

The protein belongs to the bacterial ribosomal protein bS6 family.

Functionally, binds together with bS18 to 16S ribosomal RNA. The polypeptide is Small ribosomal subunit protein bS6 (Rhizobium etli (strain ATCC 51251 / DSM 11541 / JCM 21823 / NBRC 15573 / CFN 42)).